Consider the following 122-residue polypeptide: Large ribosomal subunit protein uL14 (122 aa).

This sequence belongs to the universal ribosomal protein uL14 family. As to quaternary structure, part of the 50S ribosomal subunit. Forms a cluster with proteins L3 and L19. In the 70S ribosome, L14 and L19 interact and together make contacts with the 16S rRNA in bridges B5 and B8.

In terms of biological role, binds to 23S rRNA. Forms part of two intersubunit bridges in the 70S ribosome. The polypeptide is Large ribosomal subunit protein uL14 (Rhizobium meliloti (strain 1021) (Ensifer meliloti)).